The sequence spans 328 residues: Beta-ketoacyl-[acyl-carrier-protein] synthase III (328 aa).

Residues Cys113 and His253 contribute to the active site. The tract at residues 254–258 is ACP-binding; it reads QANLR. Asn283 is an active-site residue.

It belongs to the thiolase-like superfamily. FabH family. Homodimer.

The protein localises to the cytoplasm. The catalysed reaction is malonyl-[ACP] + acetyl-CoA + H(+) = 3-oxobutanoyl-[ACP] + CO2 + CoA. Its pathway is lipid metabolism; fatty acid biosynthesis. Functionally, catalyzes the condensation reaction of fatty acid synthesis by the addition to an acyl acceptor of two carbons from malonyl-ACP. Catalyzes the first condensation reaction which initiates fatty acid synthesis and may therefore play a role in governing the total rate of fatty acid production. Possesses both acetoacetyl-ACP synthase and acetyl transacylase activities. Its substrate specificity determines the biosynthesis of branched-chain and/or straight-chain of fatty acids. This chain is Beta-ketoacyl-[acyl-carrier-protein] synthase III, found in Fusobacterium nucleatum subsp. nucleatum (strain ATCC 25586 / DSM 15643 / BCRC 10681 / CIP 101130 / JCM 8532 / KCTC 2640 / LMG 13131 / VPI 4355).